Consider the following 180-residue polypeptide: Ribosome-recycling factor (180 aa).

It belongs to the RRF family.

It is found in the cytoplasm. Responsible for the release of ribosomes from messenger RNA at the termination of protein biosynthesis. May increase the efficiency of translation by recycling ribosomes from one round of translation to another. The chain is Ribosome-recycling factor from Chlamydia abortus (strain DSM 27085 / S26/3) (Chlamydophila abortus).